A 139-amino-acid chain; its full sequence is D-ribose pyranase (139 aa).

The Proton donor role is filled by histidine 20. Substrate contacts are provided by residues aspartate 28, histidine 106, and 128 to 130; that span reads YAN.

It belongs to the RbsD / FucU family. RbsD subfamily. Homodecamer.

The protein localises to the cytoplasm. It catalyses the reaction beta-D-ribopyranose = beta-D-ribofuranose. It functions in the pathway carbohydrate metabolism; D-ribose degradation; D-ribose 5-phosphate from beta-D-ribopyranose: step 1/2. Its function is as follows. Catalyzes the interconversion of beta-pyran and beta-furan forms of D-ribose. The chain is D-ribose pyranase from Escherichia coli O81 (strain ED1a).